The sequence spans 186 residues: Probable nicotinate-nucleotide adenylyltransferase (186 aa).

This sequence belongs to the NadD family.

The enzyme catalyses nicotinate beta-D-ribonucleotide + ATP + H(+) = deamido-NAD(+) + diphosphate. The protein operates within cofactor biosynthesis; NAD(+) biosynthesis; deamido-NAD(+) from nicotinate D-ribonucleotide: step 1/1. Functionally, catalyzes the reversible adenylation of nicotinate mononucleotide (NaMN) to nicotinic acid adenine dinucleotide (NaAD). The protein is Probable nicotinate-nucleotide adenylyltransferase of Thermus thermophilus (strain ATCC 27634 / DSM 579 / HB8).